The sequence spans 404 residues: Cysteine desulfurase IscS (404 aa).

Residues alanine 75–threonine 76, asparagine 155, glutamine 183, and serine 203–histidine 205 contribute to the pyridoxal 5'-phosphate site. At lysine 206 the chain carries N6-(pyridoxal phosphate)lysine. Residue threonine 243 coordinates pyridoxal 5'-phosphate. Cysteine 328 (cysteine persulfide intermediate) is an active-site residue. Cysteine 328 is a [2Fe-2S] cluster binding site.

It belongs to the class-V pyridoxal-phosphate-dependent aminotransferase family. NifS/IscS subfamily. Homodimer. Forms a heterotetramer with IscU, interacts with other sulfur acceptors. Pyridoxal 5'-phosphate serves as cofactor.

The protein localises to the cytoplasm. It carries out the reaction (sulfur carrier)-H + L-cysteine = (sulfur carrier)-SH + L-alanine. It functions in the pathway cofactor biosynthesis; iron-sulfur cluster biosynthesis. In terms of biological role, master enzyme that delivers sulfur to a number of partners involved in Fe-S cluster assembly, tRNA modification or cofactor biosynthesis. Catalyzes the removal of elemental sulfur atoms from cysteine to produce alanine. Functions as a sulfur delivery protein for Fe-S cluster synthesis onto IscU, an Fe-S scaffold assembly protein, as well as other S acceptor proteins. The sequence is that of Cysteine desulfurase IscS from Shewanella sediminis (strain HAW-EB3).